The sequence spans 311 residues: Olfactory receptor 10G8 (311 aa).

Over 1-23 (MSNASLLTAFILMGLPHAPALDA) the chain is Extracellular. N-linked (GlcNAc...) asparagine glycosylation occurs at Asn-3. A helical transmembrane segment spans residues 24 to 44 (PLFGVFLVVYVLTVLGNLLIL). Residues 45 to 52 (LVIRVDSH) lie on the Cytoplasmic side of the membrane. Residues 53-73 (LHTTMYYFLTNLSFIDMWFST) traverse the membrane as a helical segment. Residues 74–98 (VTVPKLLMTLVFPSGRAISFHSCMA) are Extracellular-facing. Cys-96 and Cys-188 are disulfide-bonded. A helical membrane pass occupies residues 99–119 (QLYFFHFLGGTECFLYRVMSC). Residues 120–138 (DRYLAISYPLRYTSMMTGR) are Cytoplasmic-facing. A helical membrane pass occupies residues 139–159 (SCTLLATSTWLSGSLHSAVQA). Over 160 to 196 (ILTFHLPYCGPNWIQHYLCDAPPILKLACADTSAIET) the chain is Extracellular. Residues 197-216 (VIFVTVGIVASGCFVLIVLS) form a helical membrane-spanning segment. Residues 217 to 236 (YVSIVCSILRIRTSEGKHRA) are Cytoplasmic-facing. Residues 237–257 (FQTCASHCIVVLCFFGPGLFI) traverse the membrane as a helical segment. The Extracellular portion of the chain corresponds to 258–268 (YLRPGSRKAVD). The chain crosses the membrane as a helical span at residues 269–289 (GVVAVFYTVLTPLLNPVVYTL). Residues 290–311 (RNKEVKKALLKLKDKVAHSQSK) are Cytoplasmic-facing.

The protein belongs to the G-protein coupled receptor 1 family.

Its subcellular location is the cell membrane. In terms of biological role, odorant receptor. This Homo sapiens (Human) protein is Olfactory receptor 10G8 (OR10G8).